Here is a 522-residue protein sequence, read N- to C-terminus: U4/U6 small nuclear ribonucleoprotein Prp4 (522 aa).

Positions 1 to 13 (MASSRASSTQATK) are enriched in polar residues. Residues 1–20 (MASSRASSTQATKTKAPDDL) form a disordered region. N6-acetyllysine is present on Lys27. WD repeat units follow at residues 229–268 (GDDR…LLHT), 271–318 (GHNT…PVAD), 321–360 (GHTV…EILH), 363–402 (GHSM…CIMF), 405–444 (GHLK…CVYT), 447–487 (AHQN…PLKT), and 490–521 (GHEG…LWMA).

As to quaternary structure, component of the precatalytic spliceosome (spliceosome B complex). Component of the U4/U6-U5 tri-snRNP complex, a building block of the precatalytic spliceosome (spliceosome B complex). The U4/U6-U5 tri-snRNP complex is composed of the U4, U6 and U5 snRNAs and at least PRPF3, PRPF4, PRPF6, PRPF8, PRPF31, SNRNP200, TXNL4A, SNRNP40, SNRPB, SNRPD1, SNRPD2, SNRPD3, SNRPE, SNRPF, SNRPG, DDX23, CD2BP2, PPIH, SNU13, EFTUD2, SART1 and USP39, plus LSM2, LSM3, LSM4, LSM5, LSM6, LSM7 and LSM8. Interacts directly with PRPF18, PPIH and PRPF3. Part of a heteromeric complex containing PPIH, PRPF3 and PRPF4 that is stable in the absence of RNA. Interacts with ERCC6.

The protein resides in the nucleus. It localises to the nucleus speckle. Its function is as follows. Plays a role in pre-mRNA splicing as component of the U4/U6-U5 tri-snRNP complex that is involved in spliceosome assembly, and as component of the precatalytic spliceosome (spliceosome B complex). The polypeptide is U4/U6 small nuclear ribonucleoprotein Prp4 (PRPF4) (Homo sapiens (Human)).